The following is a 179-amino-acid chain: ATP synthase subunit delta (179 aa).

It belongs to the ATPase delta chain family. F-type ATPases have 2 components, F(1) - the catalytic core - and F(0) - the membrane proton channel. F(1) has five subunits: alpha(3), beta(3), gamma(1), delta(1), epsilon(1). F(0) has three main subunits: a(1), b(2) and c(10-14). The alpha and beta chains form an alternating ring which encloses part of the gamma chain. F(1) is attached to F(0) by a central stalk formed by the gamma and epsilon chains, while a peripheral stalk is formed by the delta and b chains.

It localises to the cell membrane. Its function is as follows. F(1)F(0) ATP synthase produces ATP from ADP in the presence of a proton or sodium gradient. F-type ATPases consist of two structural domains, F(1) containing the extramembraneous catalytic core and F(0) containing the membrane proton channel, linked together by a central stalk and a peripheral stalk. During catalysis, ATP synthesis in the catalytic domain of F(1) is coupled via a rotary mechanism of the central stalk subunits to proton translocation. Functionally, this protein is part of the stalk that links CF(0) to CF(1). It either transmits conformational changes from CF(0) to CF(1) or is implicated in proton conduction. This is ATP synthase subunit delta from Metamycoplasma arthritidis (strain 158L3-1) (Mycoplasma arthritidis).